The chain runs to 473 residues: UDP-glycosyltransferase 71B1 (473 aa).

The active-site Proton acceptor is the His-15. His-15 contributes to the an anthocyanidin binding site. Catalysis depends on Asp-110, which acts as the Charge relay. Thr-132, Ala-342, Gln-344, His-359, Trp-362, Asn-363, Ser-364, and Glu-367 together coordinate UDP-alpha-D-glucose. Ala-382 contacts an anthocyanidin. UDP-alpha-D-glucose-binding residues include Glu-383 and Gln-384.

Belongs to the UDP-glycosyltransferase family.

It catalyses the reaction a flavonol + UDP-alpha-D-glucose = a flavonol 3-O-beta-D-glucoside + UDP + H(+). Possesses quercetin 3-O-glucosyltransferase activity in vitro. Also active in vitro on benzoates and benzoate derivatives. In Arabidopsis thaliana (Mouse-ear cress), this protein is UDP-glycosyltransferase 71B1 (UGT71B1).